Reading from the N-terminus, the 110-residue chain is Early E3B 12.7 kDa protein (110 aa).

An N-terminal signal peptide occupies residues 1-16; it reads MKTALVLFFMLIPVWA. A helical transmembrane segment spans residues 37 to 57; that stretch reads YIGWVYGIMSGLVFVSSVVSL.

It belongs to the adenoviridae E3_14 family. Phosphorylated on serine; O-glycosylated, but not N-glycosylated.

The protein localises to the host membrane. Its function is as follows. Down-regulates the EGF receptor and prevents cytolysis by TNF. The chain is Early E3B 12.7 kDa protein from Homo sapiens (Human).